The sequence spans 160 residues: Large ribosomal subunit protein uL22c (160 aa).

The protein belongs to the universal ribosomal protein uL22 family. As to quaternary structure, part of the 50S ribosomal subunit.

It is found in the plastid. It localises to the chloroplast. Its function is as follows. This protein binds specifically to 23S rRNA. Functionally, the globular domain of the protein is located near the polypeptide exit tunnel on the outside of the subunit, while an extended beta-hairpin is found that lines the wall of the exit tunnel in the center of the 70S ribosome. The chain is Large ribosomal subunit protein uL22c (rpl22) from Nasturtium officinale (Watercress).